Reading from the N-terminus, the 537-residue chain is Putative cysteine ligase BshC (537 aa).

Residues isoleucine 422 to isoleucine 450 are a coiled coil.

Belongs to the BshC family.

Involved in bacillithiol (BSH) biosynthesis. May catalyze the last step of the pathway, the addition of cysteine to glucosamine malate (GlcN-Mal) to generate BSH. This Staphylococcus aureus (strain COL) protein is Putative cysteine ligase BshC.